A 373-amino-acid chain; its full sequence is Anhydro-N-acetylmuramic acid kinase (373 aa).

Position 12 to 19 (12 to 19) interacts with ATP; that stretch reads GTSLDGVD.

The protein belongs to the anhydro-N-acetylmuramic acid kinase family.

The enzyme catalyses 1,6-anhydro-N-acetyl-beta-muramate + ATP + H2O = N-acetyl-D-muramate 6-phosphate + ADP + H(+). The protein operates within amino-sugar metabolism; 1,6-anhydro-N-acetylmuramate degradation. It functions in the pathway cell wall biogenesis; peptidoglycan recycling. Functionally, catalyzes the specific phosphorylation of 1,6-anhydro-N-acetylmuramic acid (anhMurNAc) with the simultaneous cleavage of the 1,6-anhydro ring, generating MurNAc-6-P. Is required for the utilization of anhMurNAc either imported from the medium or derived from its own cell wall murein, and thus plays a role in cell wall recycling. The polypeptide is Anhydro-N-acetylmuramic acid kinase (Salmonella dublin (strain CT_02021853)).